The following is a 381-amino-acid chain: E3 ubiquitin-protein ligase RNF13 (381 aa).

Positions 1–34 are cleaved as a signal peptide; the sequence is MLLSIGMLMLSATQVYTILTVQLFAFLNLLPVEA. The Lumenal portion of the chain corresponds to 35–182; it reads DILAYNFENA…VPELSLPLEY (148 aa). The PA domain maps to 64 to 160; the sequence is LKGFLINSKP…GESSANSLKD (97 aa). Residue Asn-88 is glycosylated (N-linked (GlcNAc...) asparagine). The chain crosses the membrane as a helical span at residues 183–203; that stretch reads YLIPFLIIVGICLILIVIFMI. The Cytoplasmic portion of the chain corresponds to 204-381; that stretch reads TKFVQDRHRN…EQDYNIANTV (178 aa). The RING-type; atypical zinc finger occupies 240 to 282; sequence CAICLEEYEDGDKLRILPCSHAYHCKCVDPWLTKTKKTCPVCK. A disordered region spans residues 285–381; the sequence is VVPSQGDSDS…EQDYNIANTV (97 aa). The span at 317–328 shows a compositional bias: polar residues; the sequence is SARTQSFGSLSE. Positions 339–357 are enriched in acidic residues; sequence SDYEDDDNEETDSSDADNE. The span at 365 to 381 shows a compositional bias: polar residues; the sequence is VQLQPNGEQDYNIANTV.

In terms of assembly, interacts with ERN1. In terms of processing, autoubiquitinated. N-glycosylated and also modified with chondroitin sulfate. In terms of tissue distribution, expressed in the brain, heart, kidney, liver and spleen. Higher expression in adult tissues compared to the embryonic counterparts.

The protein resides in the endoplasmic reticulum membrane. The protein localises to the late endosome membrane. It is found in the lysosome membrane. It localises to the nucleus inner membrane. It carries out the reaction S-ubiquitinyl-[E2 ubiquitin-conjugating enzyme]-L-cysteine + [acceptor protein]-L-lysine = [E2 ubiquitin-conjugating enzyme]-L-cysteine + N(6)-ubiquitinyl-[acceptor protein]-L-lysine.. The protein operates within protein modification; protein ubiquitination. In terms of biological role, E3 ubiquitin-protein ligase that regulates cell proliferation. Involved in apoptosis regulation. Mediates ER stress-induced activation of JNK signaling pathway and apoptosis by promoting ERN1 activation and splicing of XBP1 mRNA. Also involved in protein trafficking and localization. This is E3 ubiquitin-protein ligase RNF13 (Rnf13) from Mus musculus (Mouse).